A 352-amino-acid polypeptide reads, in one-letter code: Photosystem II D2 protein 2 (352 aa).

Residues 40–60 (CAYLALGGWLTGTSFVTSWYT) form a helical membrane-spanning segment. His-117 provides a ligand contact to chlorophyll a. Residues 124-140 (GFMLRQFEIARLVGVRP) traverse the membrane as a helical segment. 2 residues coordinate pheophytin a: Gln-129 and Asn-142. Residues 152-165 (VFVSVFLMYPLGQS) traverse the membrane as a helical segment. His-197 is a binding site for chlorophyll a. The chain crosses the membrane as a helical span at residues 207 to 227 (GALLCAIHGATVENTLFEDSE). A plastoquinone-binding residues include His-214 and Phe-261. His-214 contacts Fe cation. His-268 lines the Fe cation pocket. A helical transmembrane segment spans residues 278-294 (GLWMSSIGIVGLALNLR).

Belongs to the reaction center PufL/M/PsbA/D family. In terms of assembly, PSII is composed of 1 copy each of membrane proteins PsbA, PsbB, PsbC, PsbD, PsbE, PsbF, PsbH, PsbI, PsbJ, PsbK, PsbL, PsbM, PsbT, PsbX, PsbY, PsbZ, Psb30/Ycf12, peripheral proteins PsbO, CyanoQ (PsbQ), PsbU, PsbV and a large number of cofactors. It forms dimeric complexes. The cofactor is The D1/D2 heterodimer binds P680, chlorophylls that are the primary electron donor of PSII, and subsequent electron acceptors. It shares a non-heme iron and each subunit binds pheophytin, quinone, additional chlorophylls, carotenoids and lipids. There is also a Cl(-1) ion associated with D1 and D2, which is required for oxygen evolution. The PSII complex binds additional chlorophylls, carotenoids and specific lipids..

The protein localises to the cellular thylakoid membrane. It carries out the reaction 2 a plastoquinone + 4 hnu + 2 H2O = 2 a plastoquinol + O2. Its function is as follows. Photosystem II (PSII) is a light-driven water:plastoquinone oxidoreductase that uses light energy to abstract electrons from H(2)O, generating O(2) and a proton gradient subsequently used for ATP formation. It consists of a core antenna complex that captures photons, and an electron transfer chain that converts photonic excitation into a charge separation. The D1/D2 (PsbA/PsbD) reaction center heterodimer binds P680, the primary electron donor of PSII as well as several subsequent electron acceptors. D2 is needed for assembly of a stable PSII complex. This Synechococcus sp. (strain ATCC 27144 / PCC 6301 / SAUG 1402/1) (Anacystis nidulans) protein is Photosystem II D2 protein 2.